A 164-amino-acid polypeptide reads, in one-letter code: UPF0225 protein Shewmr7_1921 (164 aa).

The protein belongs to the UPF0225 family.

The chain is UPF0225 protein Shewmr7_1921 from Shewanella sp. (strain MR-7).